We begin with the raw amino-acid sequence, 86 residues long: Small ribosomal subunit protein bS16 (86 aa).

The protein belongs to the bacterial ribosomal protein bS16 family.

In Myxococcus xanthus (strain DK1622), this protein is Small ribosomal subunit protein bS16.